A 218-amino-acid chain; its full sequence is NADH dehydrogenase [ubiquinone] iron-sulfur protein 7, mitochondrial (218 aa).

The span at leucine 34–arginine 48 shows a compositional bias: low complexity. The tract at residues leucine 34–leucine 61 is disordered. Residues proline 49–glycine 60 are compositionally biased toward pro residues. Residues cysteine 93, cysteine 94, cysteine 158, and cysteine 188 each coordinate [4Fe-4S] cluster.

Belongs to the complex I 20 kDa subunit family. In terms of assembly, complex I is composed of at least 49 different subunits. This is a component of the iron-sulfur (IP) fragment of the enzyme. [4Fe-4S] cluster serves as cofactor.

It localises to the mitochondrion. It carries out the reaction a ubiquinone + NADH + 5 H(+)(in) = a ubiquinol + NAD(+) + 4 H(+)(out). Its function is as follows. Core subunit of the mitochondrial membrane respiratory chain NADH dehydrogenase (Complex I) that is believed to belong to the minimal assembly required for catalysis. Complex I functions in the transfer of electrons from NADH to the respiratory chain. The immediate electron acceptor for the enzyme is believed to be ubiquinone. This chain is NADH dehydrogenase [ubiquinone] iron-sulfur protein 7, mitochondrial, found in Arabidopsis thaliana (Mouse-ear cress).